We begin with the raw amino-acid sequence, 896 residues long: Valine--tRNA ligase (896 aa).

The 'HIGH' region motif lies at 48-58; that stretch reads PNVTGSLHMGH. A 'KMSKS' region motif is present at residues 543 to 547; that stretch reads KMSKS. Lys-546 contacts ATP. Positions 830-896 form a coiled coil; the sequence is VIDLDAERTR…ARLGAALERL (67 aa).

This sequence belongs to the class-I aminoacyl-tRNA synthetase family. ValS type 1 subfamily. Monomer.

The protein localises to the cytoplasm. The enzyme catalyses tRNA(Val) + L-valine + ATP = L-valyl-tRNA(Val) + AMP + diphosphate. Its function is as follows. Catalyzes the attachment of valine to tRNA(Val). As ValRS can inadvertently accommodate and process structurally similar amino acids such as threonine, to avoid such errors, it has a 'posttransfer' editing activity that hydrolyzes mischarged Thr-tRNA(Val) in a tRNA-dependent manner. The chain is Valine--tRNA ligase from Granulibacter bethesdensis (strain ATCC BAA-1260 / CGDNIH1).